A 379-amino-acid polypeptide reads, in one-letter code: uncharacterized protein (379 aa).

A helical transmembrane segment spans residues 9 to 26 (YFQLITTIFLISSITIAA).

The protein to A.liquefaciens L-sorbosone dehydrogenase.

Its subcellular location is the membrane. This is an uncharacterized protein from Borreliella burgdorferi (strain ATCC 35210 / DSM 4680 / CIP 102532 / B31) (Borrelia burgdorferi).